Consider the following 657-residue polypeptide: Glycogen debranching enzyme (657 aa).

Asp-336 serves as the catalytic Nucleophile. The active-site Proton donor is the Glu-371. Positions 460–479 (ANGEENRDGTNNNYSNNHGK) are disordered.

This sequence belongs to the glycosyl hydrolase 13 family.

The catalysed reaction is Hydrolysis of (1-&gt;6)-alpha-D-glucosidic linkages to branches with degrees of polymerization of three or four glucose residues in limit dextrin.. It functions in the pathway glycan degradation; glycogen degradation. Functionally, removes maltotriose and maltotetraose chains that are attached by 1,6-alpha-linkage to the limit dextrin main chain, generating a debranched limit dextrin. This is Glycogen debranching enzyme from Shigella flexneri serotype 5b (strain 8401).